A 78-amino-acid polypeptide reads, in one-letter code: Large ribosomal subunit protein bL28 (78 aa).

The protein belongs to the bacterial ribosomal protein bL28 family.

The polypeptide is Large ribosomal subunit protein bL28 (Microcystis aeruginosa (strain NIES-843 / IAM M-2473)).